A 274-amino-acid polypeptide reads, in one-letter code: Envelope glycoprotein L (274 aa).

The first 21 residues, 1–21 (MMPLLLLILLSTRNLLGAAQS), serve as a signal peptide directing secretion. The gL betaherpesvirus-type domain occupies 51 to 251 (VEHKCREALA…RSYRDRFPAV (201 aa)). The cysteines at positions 156 and 161 are disulfide-linked.

This sequence belongs to the herpesviridae glycoprotein L (gL) family. Betaherpesvirinae gL subfamily. Interacts with glycoprotein H (gH); this interaction is necessary for the correct processing and cell surface expression of gH.

The protein resides in the virion membrane. The protein localises to the host cell membrane. It is found in the host Golgi apparatus. It localises to the host trans-Golgi network. Its function is as follows. The heterodimer glycoprotein H-glycoprotein L is required for the fusion of viral and plasma membranes leading to virus entry into the host cell. Acts as a functional inhibitor of gH and maintains gH in an inhibited form. Upon binding to host integrins, gL dissociates from gH leading to activation of the viral fusion glycoproteins gB and gH. This is Envelope glycoprotein L from Mus musculus (Mouse).